Consider the following 46-residue polypeptide: Diuretic hormone class 1 (46 aa).

Position 46 is an isoleucine amide (isoleucine 46).

Its subcellular location is the secreted. Regulation of fluid secretion. Stimulates primary urine secretion by Malpighian tubules and causes a dose-dependent stimulation of cAMP levels in the tubules. Has a greater effect on the transport of Na(+) then K(+) ions. In vitro, has synergistic effects with the smaller diuretic hormone DH(31) which co-occurs with it. This is Diuretic hormone class 1 from Diploptera punctata (Pacific beetle cockroach).